The primary structure comprises 757 residues: Endoribonuclease ysh1 (757 aa).

His-78, His-80, Asp-82, His-83, His-165, and Asp-186 together coordinate Zn(2+). His-403 acts as the Proton donor in catalysis. A Zn(2+)-binding site is contributed by His-425. Residues Ser-698 to Ser-757 are disordered. Residues Val-702–Asp-714 show a composition bias toward acidic residues. Over residues Asp-715–Ser-757 the composition is skewed to basic and acidic residues.

It belongs to the metallo-beta-lactamase superfamily. RNA-metabolizing metallo-beta-lactamase-like family. CPSF2/YSH1 subfamily.

Its subcellular location is the cytoplasm. It localises to the nucleus. Component of the cleavage factor I (CF I) involved in pre-mRNA 3'-end processing. The protein is Endoribonuclease ysh1 (ysh1) of Schizosaccharomyces pombe (strain 972 / ATCC 24843) (Fission yeast).